The chain runs to 279 residues: Four and a half LIM domains protein 2 (279 aa).

A C4-type zinc finger spans residues 7–31 (CHHCNESLYGKKYILKEENPHCVAC). LIM zinc-binding domains follow at residues 40–92 (CEEC…CTDC), 101–153 (CQEC…CVPC), and 162–212 (CVQC…CLTC). A Glycyl lysine isopeptide (Lys-Gly) (interchain with G-Cter in SUMO2) cross-link involves residue Lys78. Glycyl lysine isopeptide (Lys-Gly) (interchain with G-Cter in SUMO2) cross-links involve residues Lys167 and Lys220. Residues 221-275 (CAGCTNPISGLGGTKYISFEERQWHNDCFNCKKCSLSLVGRGFLTERDDILCPDC) enclose the LIM zinc-binding 4 domain. The residue at position 238 (Ser238) is a Phosphoserine.

As to quaternary structure, interacts with ZNF638 and TTN/titin. Interacts with E4F1. Interacts with GRB7. Interacts with SIRT1 and FOXO1. Interacts with CEFIP. Interacts with calcineurin. Interacts with FOXK1. Highly expressed in heart but also detectable in brain and skeletal muscle.

It localises to the cytoplasm. It is found in the nucleus. Its subcellular location is the myofibril. The protein resides in the sarcomere. The protein localises to the z line. In terms of biological role, may function as a molecular transmitter linking various signaling pathways to transcriptional regulation. Negatively regulates the transcriptional repressor E4F1 and may function in cell growth. Inhibits the transcriptional activity of FOXO1 and its apoptotic function by enhancing the interaction of FOXO1 with SIRT1 and FOXO1 deacetylation. Negatively regulates the calcineurin/NFAT signaling pathway in cardiomyocytes. The chain is Four and a half LIM domains protein 2 (Fhl2) from Mus musculus (Mouse).